Reading from the N-terminus, the 261-residue chain is uncharacterized protein (261 aa).

The first 22 residues, 1-22 (MIHSKKLTLGICLVLLIILIGG), serve as a signal peptide directing secretion. A lipid anchor (N-palmitoyl cysteine) is attached at cysteine 23. Cysteine 23 is lipidated: S-diacylglycerol cysteine.

The protein belongs to the staphylococcal tandem lipoprotein family.

The protein localises to the cell membrane. This is an uncharacterized protein from Staphylococcus aureus (strain NCTC 8325 / PS 47).